Reading from the N-terminus, the 70-residue chain is Conotoxin Lt11.6 (70 aa).

An N-terminal signal peptide occupies residues Met1–Ala26. 4 cysteine pairs are disulfide-bonded: Cys27/Cys41, Cys34/Cys46, Cys40/Cys50, and Cys45/Cys54. A propeptide spanning residues Ala58 to Arg70 is cleaved from the precursor.

The protein belongs to the conotoxin I2 superfamily. As to expression, expressed by the venom duct.

It localises to the secreted. This Conus litteratus (Lettered cone) protein is Conotoxin Lt11.6.